The following is a 343-amino-acid chain: Protein-glutamate methylesterase/protein-glutamine glutaminase 2 (343 aa).

Positions 5–122 (KVLVVDDSAI…SVGDMSGQLV (118 aa)) constitute a Response regulatory domain. At Asp56 the chain carries 4-aspartylphosphate. The CheB-type methylesterase domain maps to 154 to 343 (AETSNKVIAI…SIADEIVRMV (190 aa)). Residues Ser166, His192, and Asp288 contribute to the active site.

The protein belongs to the CheB family. In terms of processing, phosphorylated by CheA. Phosphorylation of the N-terminal regulatory domain activates the methylesterase activity.

The protein resides in the cytoplasm. The catalysed reaction is [protein]-L-glutamate 5-O-methyl ester + H2O = L-glutamyl-[protein] + methanol + H(+). The enzyme catalyses L-glutaminyl-[protein] + H2O = L-glutamyl-[protein] + NH4(+). In terms of biological role, involved in chemotaxis. Part of a chemotaxis signal transduction system that modulates chemotaxis in response to various stimuli. Catalyzes the demethylation of specific methylglutamate residues introduced into the chemoreceptors (methyl-accepting chemotaxis proteins or MCP) by CheR. Also mediates the irreversible deamidation of specific glutamine residues to glutamic acid. This is Protein-glutamate methylesterase/protein-glutamine glutaminase 2 from Syntrophus aciditrophicus (strain SB).